The sequence spans 701 residues: Elongation factor G (701 aa).

The tr-type G domain maps to 11–287 (TKVRNIGIMA…AVIDYLPSPL (277 aa)). Residues 20–27 (AHIDAGKT), 84–88 (DTPGH), and 138–141 (NKMD) each bind GTP.

This sequence belongs to the TRAFAC class translation factor GTPase superfamily. Classic translation factor GTPase family. EF-G/EF-2 subfamily.

The protein resides in the cytoplasm. In terms of biological role, catalyzes the GTP-dependent ribosomal translocation step during translation elongation. During this step, the ribosome changes from the pre-translocational (PRE) to the post-translocational (POST) state as the newly formed A-site-bound peptidyl-tRNA and P-site-bound deacylated tRNA move to the P and E sites, respectively. Catalyzes the coordinated movement of the two tRNA molecules, the mRNA and conformational changes in the ribosome. This Mycobacterium leprae (strain Br4923) protein is Elongation factor G.